A 275-amino-acid chain; its full sequence is Adenosylcobinamide-GDP ribazoletransferase (275 aa).

Helical transmembrane passes span 52–72 (VVGVVFGVLTAVLLGLLGVLG), 73–93 (VTPLLTAVLVVIMWELLNRMM), 126–146 (MGFSAVLFSLLVQVTAVAALV), 181–201 (FGAMVVGTVRLWWVAAWLVAL), 208–228 (VAVWAAGPAVVWIVPAAGIIA), and 251–271 (IGAGIHLSAAVVAVFCAVAVA).

The protein belongs to the CobS family. Mg(2+) serves as cofactor.

The protein resides in the cell membrane. The enzyme catalyses alpha-ribazole + adenosylcob(III)inamide-GDP = adenosylcob(III)alamin + GMP + H(+). The catalysed reaction is alpha-ribazole 5'-phosphate + adenosylcob(III)inamide-GDP = adenosylcob(III)alamin 5'-phosphate + GMP + H(+). Its pathway is cofactor biosynthesis; adenosylcobalamin biosynthesis; adenosylcobalamin from cob(II)yrinate a,c-diamide: step 7/7. Its function is as follows. Joins adenosylcobinamide-GDP and alpha-ribazole to generate adenosylcobalamin (Ado-cobalamin). Also synthesizes adenosylcobalamin 5'-phosphate from adenosylcobinamide-GDP and alpha-ribazole 5'-phosphate. The chain is Adenosylcobinamide-GDP ribazoletransferase from Corynebacterium efficiens (strain DSM 44549 / YS-314 / AJ 12310 / JCM 11189 / NBRC 100395).